Reading from the N-terminus, the 189-residue chain is Glycerol-3-phosphate acyltransferase (189 aa).

The next 5 helical transmembrane spans lie at 1-21 (MFWLLALLAYLLGSLSFAIVL), 50-70 (KLAILTLLGDLCKGLLPVLLA), 77-97 (LHAQAWVGICAVLGHLFPLYF), 111-131 (MLMALYFPAALLAIGAWLLTF), and 151-171 (LLAWREPEALLPISVLTVMIV).

Belongs to the PlsY family. Probably interacts with PlsX.

It localises to the cell inner membrane. The enzyme catalyses an acyl phosphate + sn-glycerol 3-phosphate = a 1-acyl-sn-glycero-3-phosphate + phosphate. It participates in lipid metabolism; phospholipid metabolism. Catalyzes the transfer of an acyl group from acyl-phosphate (acyl-PO(4)) to glycerol-3-phosphate (G3P) to form lysophosphatidic acid (LPA). This enzyme utilizes acyl-phosphate as fatty acyl donor, but not acyl-CoA or acyl-ACP. In Pseudomonas putida (strain ATCC 47054 / DSM 6125 / CFBP 8728 / NCIMB 11950 / KT2440), this protein is Glycerol-3-phosphate acyltransferase.